We begin with the raw amino-acid sequence, 25 residues long: Germin-like protein (25 aa).

It belongs to the germin family.

This Populus euphratica (Euphrates poplar) protein is Germin-like protein.